We begin with the raw amino-acid sequence, 304 residues long: CBY1-interacting BAR domain-containing protein 2 (304 aa).

The interval 6–217 is BAR-like; it reads SRDSQVRVME…EKYDLERDLL (212 aa).

This sequence belongs to the CIBAR family. In terms of assembly, homodimer (via BAR-like domain). Heterodimer (via BAR-like domain) with FAM92A. Interacts with CBY1. In terms of tissue distribution, restricted to certain tissues, most prominently expressed in multicilaited tissues.

The protein resides in the cytoplasm. It localises to the cytoskeleton. The protein localises to the microtubule organizing center. Its subcellular location is the centrosome. It is found in the centriole. The protein resides in the cilium basal body. Functionally, may play a role in ciliogenesis. In cooperation with CBY1 may facilitate ciliogenesis likely by the recruitment and fusion of endosomal vesicles at distal appendages during early stages of ciliogenesis. The sequence is that of CBY1-interacting BAR domain-containing protein 2 from Homo sapiens (Human).